Reading from the N-terminus, the 301-residue chain is Homoserine O-acetyltransferase (301 aa).

The active-site Acyl-thioester intermediate is the C142. 2 residues coordinate substrate: K163 and S192. Catalysis depends on H235, which acts as the Proton acceptor. Residue E237 is part of the active site. Residue R249 coordinates substrate.

It belongs to the MetA family.

Its subcellular location is the cytoplasm. It catalyses the reaction L-homoserine + acetyl-CoA = O-acetyl-L-homoserine + CoA. Its pathway is amino-acid biosynthesis; L-methionine biosynthesis via de novo pathway; O-acetyl-L-homoserine from L-homoserine: step 1/1. Its function is as follows. Transfers an acetyl group from acetyl-CoA to L-homoserine, forming acetyl-L-homoserine. The sequence is that of Homoserine O-acetyltransferase from Bacillus cereus (strain ATCC 14579 / DSM 31 / CCUG 7414 / JCM 2152 / NBRC 15305 / NCIMB 9373 / NCTC 2599 / NRRL B-3711).